We begin with the raw amino-acid sequence, 355 residues long: MKSVVAMVAVQFIFAGMFILFKITVDDGTNLKVLVAYRLSFATIFMLPLALIFQRKKRPEFTWRLLLLAFVSGLLGAAIPNILYLPGMARTSATFSAASSIISPLITLVLGLVFRMETLRLGSNEGRAKLVGTLLGACGALVFVFYKGIEIHIWSTHVDLLKGSHTGRATTNHHVSILGVLMVLGSNVSTSLWLLLQAKIGKELGGLYWNTSLMNGVGSLVCVIIALCSDHDWEQWQLGWDINLLATLYSGIVVSGMVVPLVAWCIATKGPLFVTVFSPIRLVIVALIGSFALEEPLHLGSIIGAMIMVGGVYLVVWCKMKEKKSASTTSDHIETNKNNKELDLGNLSSVNRDVP.

Helical transmembrane passes span 4 to 24 (VVAM…FKIT), 33 to 53 (VLVA…ALIF), 65 to 85 (LLLL…ILYL), 94 to 114 (TFSA…GLVF), 134 to 154 (LLGA…IHIW), 175 to 195 (VSIL…LWLL), 207 to 227 (LYWN…IIAL), 244 to 264 (LLAT…LVAW), 272 to 292 (LFVT…GSFA), and 297 to 317 (LHLG…LVVW). Positions 12–142 (FIFAGMFILF…TLLGACGALV (131 aa)) constitute an EamA 1 domain. The region spanning 210 to 316 (NTSLMNGVGS…IMVGGVYLVV (107 aa)) is the EamA 2 domain.

This sequence belongs to the drug/metabolite transporter (DMT) superfamily. Plant drug/metabolite exporter (P-DME) (TC 2.A.7.4) family.

The protein resides in the membrane. The chain is WAT1-related protein At1g25270 from Arabidopsis thaliana (Mouse-ear cress).